A 266-amino-acid polypeptide reads, in one-letter code: Glucosamine-6-phosphate deaminase (266 aa).

Aspartate 72 functions as the Proton acceptor; for enolization step in the catalytic mechanism. Aspartate 141 serves as the catalytic For ring-opening step. Histidine 143 serves as the catalytic Proton acceptor; for ring-opening step. Glutamate 148 functions as the For ring-opening step in the catalytic mechanism.

It belongs to the glucosamine/galactosamine-6-phosphate isomerase family. NagB subfamily. As to quaternary structure, homohexamer.

It carries out the reaction alpha-D-glucosamine 6-phosphate + H2O = beta-D-fructose 6-phosphate + NH4(+). The protein operates within amino-sugar metabolism; N-acetylneuraminate degradation; D-fructose 6-phosphate from N-acetylneuraminate: step 5/5. With respect to regulation, allosterically activated by N-acetylglucosamine 6-phosphate (GlcNAc6P). Its function is as follows. Catalyzes the reversible isomerization-deamination of glucosamine 6-phosphate (GlcN6P) to form fructose 6-phosphate (Fru6P) and ammonium ion. In Citrobacter koseri (strain ATCC BAA-895 / CDC 4225-83 / SGSC4696), this protein is Glucosamine-6-phosphate deaminase.